Consider the following 117-residue polypeptide: Large ribosomal subunit protein bL19 (117 aa).

It belongs to the bacterial ribosomal protein bL19 family.

This protein is located at the 30S-50S ribosomal subunit interface and may play a role in the structure and function of the aminoacyl-tRNA binding site. The protein is Large ribosomal subunit protein bL19 of Thermotoga neapolitana (strain ATCC 49049 / DSM 4359 / NBRC 107923 / NS-E).